Consider the following 126-residue polypeptide: MLRTMLQGKLHRVKVTQADLHYEGSCAIDQDFMDAAGILENEAIDIYNVDNGERFSTYAICAERGSGIISVNGAAARRAAVGDRLIICSYVQIPDSDARSHKPNIAYFEGDNEMKRIAKAVPVQVA.

The Schiff-base intermediate with substrate; via pyruvic acid role is filled by Ser-25. A Pyruvic acid (Ser) modification is found at Ser-25. Thr-57 lines the substrate pocket. The Proton donor role is filled by Tyr-58. Position 73–75 (73–75 (GAA)) interacts with substrate.

Belongs to the PanD family. As to quaternary structure, heterooctamer of four alpha and four beta subunits. The cofactor is pyruvate. Post-translationally, is synthesized initially as an inactive proenzyme, which is activated by self-cleavage at a specific serine bond to produce a beta-subunit with a hydroxyl group at its C-terminus and an alpha-subunit with a pyruvoyl group at its N-terminus.

The protein resides in the cytoplasm. It carries out the reaction L-aspartate + H(+) = beta-alanine + CO2. It participates in cofactor biosynthesis; (R)-pantothenate biosynthesis; beta-alanine from L-aspartate: step 1/1. Its function is as follows. Catalyzes the pyruvoyl-dependent decarboxylation of aspartate to produce beta-alanine. The protein is Aspartate 1-decarboxylase of Proteus mirabilis (strain HI4320).